Reading from the N-terminus, the 642-residue chain is DNA gyrase subunit B (642 aa).

In terms of domain architecture, Toprim spans 422–536; that stretch reads CELFIVEGDS…AGYVYIAQPP (115 aa). 3 residues coordinate Mg(2+): Glu-428, Asp-501, and Asp-503.

This sequence belongs to the type II topoisomerase family. Heterotetramer, composed of two GyrA and two GyrB chains. Within the heterotetramer, GyrA contains the active site tyrosine that forms a covalent intermediate with the DNA, while GyrB contributes the cofactor binding sites and catalyzes ATP hydrolysis. It depends on Mg(2+) as a cofactor. Mn(2+) is required as a cofactor. The cofactor is Ca(2+).

Its subcellular location is the cytoplasm. It catalyses the reaction ATP-dependent breakage, passage and rejoining of double-stranded DNA.. Its activity is regulated as follows. Pyrrolopyrimidines inhibit both GyrB and its paralog in topoisomerase IV (parE). In terms of biological role, DNA gyrase negatively supercoils closed circular double-stranded DNA in an ATP-dependent manner and also catalyzes the interconversion of other topological isomers of double-stranded DNA rings, including catenanes and knotted rings. This chain is DNA gyrase subunit B, found in Enterococcus faecalis (strain ATCC 700802 / V583).